The following is a 167-amino-acid chain: Translationally-controlled tumor protein homolog (167 aa).

Residues 1 to 167 (MIIFKDVISN…WKHGIKEEKI (167 aa)) enclose the TCTP domain.

This sequence belongs to the TCTP family.

It localises to the cytoplasm. Its subcellular location is the cytoskeleton. Involved in protein synthesis. Involved in microtubule stabilization. This is Translationally-controlled tumor protein homolog from Yarrowia lipolytica (strain CLIB 122 / E 150) (Yeast).